The primary structure comprises 141 residues: Large ribosomal subunit protein uL11 (141 aa).

This sequence belongs to the universal ribosomal protein uL11 family. In terms of assembly, part of the ribosomal stalk of the 50S ribosomal subunit. Interacts with L10 and the large rRNA to form the base of the stalk. L10 forms an elongated spine to which L12 dimers bind in a sequential fashion forming a multimeric L10(L12)X complex. In terms of processing, one or more lysine residues are methylated.

Forms part of the ribosomal stalk which helps the ribosome interact with GTP-bound translation factors. The chain is Large ribosomal subunit protein uL11 from Pseudothermotoga lettingae (strain ATCC BAA-301 / DSM 14385 / NBRC 107922 / TMO) (Thermotoga lettingae).